Here is a 270-residue protein sequence, read N- to C-terminus: Protein tonB2 (270 aa).

Over 1-51 (MATPQPVDARTQPWRETPGGDLVALGRPVRQALHLVRHNPAQGRVLSRRET) the chain is Cytoplasmic. A helical transmembrane segment spans residues 52-69 (ILLVLFALTLHGAVIHWL). Residues 70-270 (SQQRTPALPE…VSVPIDFKLN (201 aa)) are Periplasmic-facing. Residues 80 to 187 (VPPQVPPMTI…LTPPSANAGY (108 aa)) form a disordered region. Positions 94 to 118 (PAPPVVEPPPPEPLPPVVEEPPPPV) are enriched in pro residues. Basic residues predominate over residues 133-143 (PKPKPKPKPQP). Residues 144–180 (RPKPAPKAVEPAPPAPPQPAAPPAPPAPAAAPAPLTP) are compositionally biased toward pro residues. The region spanning 180-270 (PPSANAGYLH…VSVPIDFKLN (91 aa)) is the TonB C-terminal domain.

This sequence belongs to the TonB family. Homodimer. Forms a complex with the accessory proteins ExbB and ExbD.

Its subcellular location is the cell inner membrane. Functionally, interacts with outer membrane receptor proteins that carry out high-affinity binding and energy dependent uptake into the periplasmic space of specific substrates. It could act to transduce energy from the cytoplasmic membrane to specific energy-requiring processes in the outer membrane, resulting in the release into the periplasm of ligands bound by these outer membrane proteins. This Pseudomonas aeruginosa (strain ATCC 15692 / DSM 22644 / CIP 104116 / JCM 14847 / LMG 12228 / 1C / PRS 101 / PAO1) protein is Protein tonB2 (tonB2).